Consider the following 98-residue polypeptide: NADH-ubiquinone oxidoreductase chain 4L (98 aa).

The next 3 membrane-spanning stretches (helical) occupy residues 1-21, 29-49, and 61-81; these read MTLVYMNMALAFTISLLGLLM, SLLCLEGMMLSLFVTMAVTIL, and IILLVFAACEAALGLSLLVMV.

It belongs to the complex I subunit 4L family. Core subunit of respiratory chain NADH dehydrogenase (Complex I) which is composed of 45 different subunits.

It localises to the mitochondrion inner membrane. It carries out the reaction a ubiquinone + NADH + 5 H(+)(in) = a ubiquinol + NAD(+) + 4 H(+)(out). In terms of biological role, core subunit of the mitochondrial membrane respiratory chain NADH dehydrogenase (Complex I) which catalyzes electron transfer from NADH through the respiratory chain, using ubiquinone as an electron acceptor. Part of the enzyme membrane arm which is embedded in the lipid bilayer and involved in proton translocation. This chain is NADH-ubiquinone oxidoreductase chain 4L (MT-ND4L), found in Rousettus aegyptiacus (Egyptian fruit bat).